The primary structure comprises 268 residues: UPF0354 protein OB2234 (268 aa).

The protein belongs to the UPF0354 family.

This chain is UPF0354 protein OB2234, found in Oceanobacillus iheyensis (strain DSM 14371 / CIP 107618 / JCM 11309 / KCTC 3954 / HTE831).